The following is a 135-amino-acid chain: Ribosome-binding factor A (135 aa).

A disordered region spans residues 115-135 (VNEDKRKQQDSGREEDQAGEE). Basic and acidic residues predominate over residues 116–135 (NEDKRKQQDSGREEDQAGEE).

It belongs to the RbfA family. As to quaternary structure, monomer. Binds 30S ribosomal subunits, but not 50S ribosomal subunits or 70S ribosomes.

The protein resides in the cytoplasm. One of several proteins that assist in the late maturation steps of the functional core of the 30S ribosomal subunit. Associates with free 30S ribosomal subunits (but not with 30S subunits that are part of 70S ribosomes or polysomes). Required for efficient processing of 16S rRNA. May interact with the 5'-terminal helix region of 16S rRNA. The polypeptide is Ribosome-binding factor A (Vibrio campbellii (strain ATCC BAA-1116)).